A 132-amino-acid polypeptide reads, in one-letter code: Riboflavin kinase (132 aa).

Residue 10-15 coordinates CDP; it reads GLGEGR. Mg(2+) contacts are provided by Thr39 and Asn41. FMN is bound by residues Thr95, Tyr96, and Glu103. A CDP-binding site is contributed by 108-111; sequence MKLR.

Monomer. It depends on Mg(2+) as a cofactor.

The catalysed reaction is riboflavin + CTP = CDP + FMN + H(+). It participates in cofactor biosynthesis; FMN biosynthesis; FMN from riboflavin (CTP route): step 1/1. In terms of biological role, catalyzes the CTP-dependent phosphorylation of riboflavin (vitamin B2) to form flavin mononucleotide (FMN). Can also utilize UTP as the phosphate donor, although less efficiently, and it is unclear if ATP and GTP can also serve as substrates or not. This Methanocaldococcus jannaschii (strain ATCC 43067 / DSM 2661 / JAL-1 / JCM 10045 / NBRC 100440) (Methanococcus jannaschii) protein is Riboflavin kinase (ribK).